A 416-amino-acid polypeptide reads, in one-letter code: D-amino acid dehydrogenase (416 aa).

Valine 3–tyrosine 17 contacts FAD.

This sequence belongs to the DadA oxidoreductase family. Requires FAD as cofactor.

The catalysed reaction is a D-alpha-amino acid + A + H2O = a 2-oxocarboxylate + AH2 + NH4(+). It participates in amino-acid degradation; D-alanine degradation; NH(3) and pyruvate from D-alanine: step 1/1. In terms of biological role, oxidative deamination of D-amino acids. This is D-amino acid dehydrogenase from Rhizobium rhizogenes (strain K84 / ATCC BAA-868) (Agrobacterium radiobacter).